Consider the following 136-residue polypeptide: Small ribosomal subunit protein uS8c (136 aa).

This sequence belongs to the universal ribosomal protein uS8 family. Part of the 30S ribosomal subunit.

The protein localises to the plastid. It localises to the chloroplast. One of the primary rRNA binding proteins, it binds directly to 16S rRNA central domain where it helps coordinate assembly of the platform of the 30S subunit. The protein is Small ribosomal subunit protein uS8c (rps8) of Oryza sativa subsp. indica (Rice).